Reading from the N-terminus, the 183-residue chain is ATP-dependent protease subunit HslV (183 aa).

Residue Thr2 is part of the active site. The Na(+) site is built by Gly157, Cys160, and Thr163.

Belongs to the peptidase T1B family. HslV subfamily. As to quaternary structure, a double ring-shaped homohexamer of HslV is capped on each side by a ring-shaped HslU homohexamer. The assembly of the HslU/HslV complex is dependent on binding of ATP.

It is found in the cytoplasm. It carries out the reaction ATP-dependent cleavage of peptide bonds with broad specificity.. With respect to regulation, allosterically activated by HslU binding. Functionally, protease subunit of a proteasome-like degradation complex believed to be a general protein degrading machinery. This chain is ATP-dependent protease subunit HslV, found in Vibrio parahaemolyticus serotype O3:K6 (strain RIMD 2210633).